Here is a 367-residue protein sequence, read N- to C-terminus: Anhydro-N-acetylmuramic acid kinase (367 aa).

Residue Gly13–Asp20 coordinates ATP.

The protein belongs to the anhydro-N-acetylmuramic acid kinase family.

It catalyses the reaction 1,6-anhydro-N-acetyl-beta-muramate + ATP + H2O = N-acetyl-D-muramate 6-phosphate + ADP + H(+). The protein operates within amino-sugar metabolism; 1,6-anhydro-N-acetylmuramate degradation. It participates in cell wall biogenesis; peptidoglycan recycling. Functionally, catalyzes the specific phosphorylation of 1,6-anhydro-N-acetylmuramic acid (anhMurNAc) with the simultaneous cleavage of the 1,6-anhydro ring, generating MurNAc-6-P. Is required for the utilization of anhMurNAc either imported from the medium or derived from its own cell wall murein, and thus plays a role in cell wall recycling. In Neisseria meningitidis serogroup A / serotype 4A (strain DSM 15465 / Z2491), this protein is Anhydro-N-acetylmuramic acid kinase.